A 290-amino-acid chain; its full sequence is Chloride intracellular channel exc-4 (290 aa).

The helical transmembrane segment at 37-57 (LFCQEFWMELYALYEIGVARV) threads the bilayer.

It belongs to the chloride channel CLIC family. As to quaternary structure, monomer. Expressed in the secretory system, hypodermis, vulva, pharyngeal muscle, rectal gland, tubular rectal epithelium cells, and tubular neuronal support cells in the head and tail.

The protein localises to the cytoplasm. The protein resides in the membrane. In terms of biological role, may insert into membranes and form chloride ion channels. Involved in the formation of the excretory canal. Required to prevent cystic lumenal expansions in the excretory cell. Not required for formation of the initial tube, but is required for regulating the size of the tube lumen as it grows. The sequence is that of Chloride intracellular channel exc-4 (exc-4) from Caenorhabditis elegans.